Consider the following 548-residue polypeptide: Rhotekin (548 aa).

One can recognise an REM-1 domain in the interval 10 to 85 (DLNMLYIRQM…LQRRKEAQVL (76 aa)). Phosphoserine is present on residues S22 and S93. The tract at residues 83–103 (QVLGKTGRRPSDSVQPPERSP) is disordered. Position 217 is an asymmetric dimethylarginine (R217). Position 219 is a phosphoserine (S219). One can recognise a PH domain in the interval 296–403 (QPTASGTLRV…WMEALWQLFL (108 aa)). A phosphoserine mark is found at S504, S513, and S528. Positions 506 to 548 (DAVPADHSLGPSRSVAPLPPQRSPQSRGFYSKSQLSTWLQSPV) are disordered. Residues 528–548 (SPQSRGFYSKSQLSTWLQSPV) are compositionally biased toward polar residues.

Interacts via its C-terminal region with the TAX1BP3 PDZ domain. This interaction facilitates Rho-mediated activation of the c-Fos serum response element (SRE). Interacts with SEPT9. Specifically binds to GTP-bound RHOA, RHOB and RHOC and inhibits their GTPase activity.

Its function is as follows. Mediates Rho signaling to activate NF-kappa-B and may confer increased resistance to apoptosis to cells in gastric tumorigenesis. May play a novel role in the organization of septin structures. In Rattus norvegicus (Rat), this protein is Rhotekin.